The sequence spans 316 residues: Small ribosomal subunit biogenesis GTPase RsgA (316 aa).

One can recognise a CP-type G domain in the interval 83-248; it reads DQYKSKLFAA…LIDSPGFQEF (166 aa). GTP is bound by residues 131 to 134 and 185 to 193; these read NKTD and GQSGMGKST. Zn(2+) contacts are provided by C272, C277, H279, and C285.

This sequence belongs to the TRAFAC class YlqF/YawG GTPase family. RsgA subfamily. In terms of assembly, monomer. Associates with 30S ribosomal subunit, binds 16S rRNA. Zn(2+) serves as cofactor.

Its subcellular location is the cytoplasm. Functionally, one of several proteins that assist in the late maturation steps of the functional core of the 30S ribosomal subunit. Helps release RbfA from mature subunits. May play a role in the assembly of ribosomal proteins into the subunit. Circularly permuted GTPase that catalyzes slow GTP hydrolysis, GTPase activity is stimulated by the 30S ribosomal subunit. In Paraburkholderia phytofirmans (strain DSM 17436 / LMG 22146 / PsJN) (Burkholderia phytofirmans), this protein is Small ribosomal subunit biogenesis GTPase RsgA.